The primary structure comprises 93 residues: Early nodulin-36B (93 aa).

In Glycine max (Soybean), this protein is Early nodulin-36B.